The primary structure comprises 82 residues: Musculoskeletal embryonic nuclear protein 1 (82 aa).

The segment at 1-34 is disordered; the sequence is MSQAGAQEAPIKKKRPPVKEEDLKGARGNLTKNQ. S2 carries the post-translational modification Phosphoserine. The Nuclear localization signal signature appears at 10–18; the sequence is PIKKKRPPV.

The protein belongs to the MUSTN1 family.

It localises to the nucleus. It is found in the cytoplasm. The protein resides in the secreted. The protein localises to the extracellular space. In terms of biological role, required for chondrocyte development and proliferation. Plays a role in myoblast differentiation and fusion. Modulates skeletal muscle extracellular matrix composition. Plays a role in skeletal muscle function. Plays a role in glucose homeostasis. This Bos taurus (Bovine) protein is Musculoskeletal embryonic nuclear protein 1 (MUSTN1).